The following is a 273-amino-acid chain: Phosphonates import ATP-binding protein PhnC (273 aa).

The ABC transporter domain occupies 2–245 (LRIDKLTKRF…VAREIYGADA (244 aa)). Residue 34–41 (GRSGAGKS) participates in ATP binding.

This sequence belongs to the ABC transporter superfamily. Phosphonates importer (TC 3.A.1.9.1) family. In terms of assembly, the complex is composed of two ATP-binding proteins (PhnC), two transmembrane proteins (PhnE) and a solute-binding protein (PhnD).

The protein resides in the cell inner membrane. The catalysed reaction is phosphonate(out) + ATP + H2O = phosphonate(in) + ADP + phosphate + H(+). In terms of biological role, part of the ABC transporter complex PhnCDE involved in phosphonates import. Responsible for energy coupling to the transport system. This chain is Phosphonates import ATP-binding protein PhnC, found in Ruegeria pomeroyi (strain ATCC 700808 / DSM 15171 / DSS-3) (Silicibacter pomeroyi).